Reading from the N-terminus, the 85-residue chain is N.vectensis toxin 1 6 (85 aa).

Residues 1–20 form the signal peptide; the sequence is MASFKIVIVCLALLVAVACA. A propeptide spanning residues 21–36 is cleaved from the precursor; that stretch reads RRRDMMSDDELDYHYS. Intrachain disulfides connect Cys42–Cys82, Cys44–Cys72, and Cys65–Cys83.

It belongs to the sea anemone sodium channel inhibitory toxin family. Type II subfamily. As to expression, expressed in ectodermal glands and in clumps outside of the extodermal layer. Is not expressed in nematocytes. In adult female tissues, shows similar expression levels in mesenteries (gametes-producing tissue), tentacles, pharynx and physa.

It is found in the secreted. In terms of biological role, binds to site 3 of voltage-gated sodium channels and inhibits the inactivation process. Is highly active on DmNav1/TipE (drosophila) and is only extremely weakly active on rat Nav1.4-beta-1/SCN4A-SCN1B, and on human Nav1.5-beta-1/SCN5A-beta-1. This reveals high specificity for arthropod over mammalian channels. In vivo, when released into the medium, this recombinant toxin induces impaired swimming, paralysis and death of the crustacean A.nauplii within several hours. Also causes paralysis of cherry shrimps immediately after injection at very low doses. Its effect on zebrafish (D.rerio) larvae is also rapid, since it induces tail twitching accompanied by impaired swimming after 20 minutes and complete paralysis within 45 minutes. It has also been observed to cause death of zebrafish larvae within 1 hour. This Nematostella vectensis (Starlet sea anemone) protein is N.vectensis toxin 1 6.